Here is a 638-residue protein sequence, read N- to C-terminus: ATP-dependent zinc metalloprotease FtsH (638 aa).

The Cytoplasmic segment spans residues 1 to 7; that stretch reads MRSTYKT. Residues 8–28 form a helical membrane-spanning segment; sequence IGLWVILIVLFVAFYNFFSQG. Residues 29–102 are Periplasmic-facing; that stretch reads NDQVQEPSFT…KYEREEQNSL (74 aa). A helical membrane pass occupies residues 103–123; the sequence is WLTILGQWMPVVFLFLFFIFF. Residues 124-638 are Cytoplasmic-facing; that stretch reads MRQLQGGSGK…GLPAMEPKKA (515 aa). 195-202 contributes to the ATP binding site; the sequence is GSPGTGKT. Histidine 417 is a Zn(2+) binding site. The active site involves glutamate 418. 2 residues coordinate Zn(2+): histidine 421 and aspartate 493. Residues 596 to 638 are disordered; the sequence is GGQLTRERPPPRVNAPPKATEKKDKRKILDALEGLPAMEPKKA. Residues 614–625 are compositionally biased toward basic and acidic residues; sequence ATEKKDKRKILD.

In the central section; belongs to the AAA ATPase family. This sequence in the C-terminal section; belongs to the peptidase M41 family. Homohexamer. The cofactor is Zn(2+).

Its subcellular location is the cell inner membrane. Its function is as follows. Acts as a processive, ATP-dependent zinc metallopeptidase for both cytoplasmic and membrane proteins. Plays a role in the quality control of integral membrane proteins. In Myxococcus xanthus (strain DK1622), this protein is ATP-dependent zinc metalloprotease FtsH.